The sequence spans 296 residues: Lipoyl synthase (296 aa).

The [4Fe-4S] cluster site is built by cysteine 37, cysteine 42, cysteine 48, cysteine 63, cysteine 67, cysteine 70, and serine 276. A Radical SAM core domain is found at 49–265 (WSKKHTTVMI…ERVAKTKGFL (217 aa)).

This sequence belongs to the radical SAM superfamily. Lipoyl synthase family. It depends on [4Fe-4S] cluster as a cofactor.

The protein resides in the cytoplasm. The enzyme catalyses [[Fe-S] cluster scaffold protein carrying a second [4Fe-4S](2+) cluster] + N(6)-octanoyl-L-lysyl-[protein] + 2 oxidized [2Fe-2S]-[ferredoxin] + 2 S-adenosyl-L-methionine + 4 H(+) = [[Fe-S] cluster scaffold protein] + N(6)-[(R)-dihydrolipoyl]-L-lysyl-[protein] + 4 Fe(3+) + 2 hydrogen sulfide + 2 5'-deoxyadenosine + 2 L-methionine + 2 reduced [2Fe-2S]-[ferredoxin]. It participates in protein modification; protein lipoylation via endogenous pathway; protein N(6)-(lipoyl)lysine from octanoyl-[acyl-carrier-protein]: step 2/2. Its function is as follows. Catalyzes the radical-mediated insertion of two sulfur atoms into the C-6 and C-8 positions of the octanoyl moiety bound to the lipoyl domains of lipoate-dependent enzymes, thereby converting the octanoylated domains into lipoylated derivatives. This Rickettsia peacockii (strain Rustic) protein is Lipoyl synthase.